We begin with the raw amino-acid sequence, 126 residues long: MQATAQVQTPVVGRHVYGELYGVDESLLKDEERLRRIVIEAAHIANMHLVEVNSWKFKGGDKEGVSVIALVLESHIAIHTWPVYNFATVDVYTCGEHSDPMAAFRYIVSQLNPKRFTVNYSDRSYK.

Ser-74 (schiff-base intermediate with substrate; via pyruvic acid) is an active-site residue. Ser-74 carries the pyruvic acid (Ser); by autocatalysis modification. The active-site Proton acceptor; for processing activity is the His-79. The active-site Proton donor; for catalytic activity is the Cys-94.

The protein belongs to the prokaryotic AdoMetDC family. Type 1 subfamily. As to quaternary structure, heterooctamer of four alpha and four beta chains arranged as a tetramer of alpha/beta heterodimers. It depends on pyruvate as a cofactor. Post-translationally, is synthesized initially as an inactive proenzyme. Formation of the active enzyme involves a self-maturation process in which the active site pyruvoyl group is generated from an internal serine residue via an autocatalytic post-translational modification. Two non-identical subunits are generated from the proenzyme in this reaction, and the pyruvate is formed at the N-terminus of the alpha chain, which is derived from the carboxyl end of the proenzyme. The post-translation cleavage follows an unusual pathway, termed non-hydrolytic serinolysis, in which the side chain hydroxyl group of the serine supplies its oxygen atom to form the C-terminus of the beta chain, while the remainder of the serine residue undergoes an oxidative deamination to produce ammonia and the pyruvoyl group blocking the N-terminus of the alpha chain.

It catalyses the reaction L-arginine + H(+) = agmatine + CO2. Its pathway is amine and polyamine biosynthesis; agmatine biosynthesis; agmatine from L-arginine: step 1/1. Functionally, specifically catalyzes the decarboxylation of L-arginine to agmatine. Has no S-adenosylmethionine decarboxylase (AdoMetDC) activity. In Pyrobaculum calidifontis (strain DSM 21063 / JCM 11548 / VA1), this protein is Arginine decarboxylase proenzyme.